A 445-amino-acid chain; its full sequence is Alpha/beta hydrolase psoB (445 aa).

Ser246 acts as the Nucleophile in catalysis.

The protein belongs to the AB hydrolase superfamily. FUS2 hydrolase family. Homodimer.

The protein operates within secondary metabolite biosynthesis. In terms of biological role, alpha/beta hydrolase; part of the gene cluster that mediates the biosynthesis of pseurotin A, a competitive inhibitor of chitin synthase and an inducer of nerve-cell proliferation. The PKS-NRPS hybrid synthetase psoA is responsible for the biosynthesis of azaspirene, one of the first intermediates having the 1-oxa-7-azaspiro[4,4]-non-2-ene-4,6-dione core of pseurotin, via condensation of one acetyl-CoA, 4 malonyl-CoA, and a L-phenylalanine molecule. The dual-functional monooxygenase/methyltransferase psoF seems to be involved in the addition of the C3 methyl group onto the pseurotin scaffold. Azaspirene is then converted to synerazol through 4 steps including oxidation of C17 by the cytochrome P450 monooxygenase psoD, O-methylation of the hydroxy group of C8 by the methyltransferase psoC, and the trans-to-cis isomerization of the C13 olefin by the glutathione S-transferase psoE. The fourth step of synerazol production is performed by the dual-functional monooxygenase/methyltransferase psoF which seems to catalyze the epoxidation of the intermediate deepoxy-synerazol. Synerazol can be attacked by a water molecule nonenzymatically at two different positions to yield two diol products, pseurotin A and pseurotin D. In Aspergillus fumigatus (strain ATCC MYA-4609 / CBS 101355 / FGSC A1100 / Af293) (Neosartorya fumigata), this protein is Alpha/beta hydrolase psoB.